A 151-amino-acid chain; its full sequence is Abdominal ganglion neuropeptide L11 (151 aa).

The N-terminal stretch at 1–25 (MPCTPNSHRLLLVTALCLLITSLFA) is a signal peptide.

It localises to the secreted. This chain is Abdominal ganglion neuropeptide L11, found in Aplysia californica (California sea hare).